The primary structure comprises 830 residues: C-Jun-amino-terminal kinase-interacting protein 2 (830 aa).

Disordered stretches follow at residues 1-26 (MADR…PPQD), 44-354 (CGLG…ADSP), 367-438 (EGSS…PGPC), 452-504 (LWAT…GSTA), and 539-574 (GNDS…PDSP). Acidic residues predominate over residues 77-105 (DFQEFEMIDDNEEEDDEEEEEEEEEEEDG). Residues 111 to 278 (AGGGPGSQAL…RMISSISETE (168 aa)) are JNK-binding domain (JBD). The segment covering 142–172 (LHLTTLGAQDSLNNNNGGFTSAPPSSWQETV) has biased composition (polar residues). Composition is skewed to low complexity over residues 176 to 190 (PAQE…PLLP) and 218 to 227 (ASSGGASPSS). Residues 233 to 249 (ADLRSHSSGGHEGRRSS) are compositionally biased toward basic and acidic residues. The necessary for interaction with FGF13 stretch occupies residues 242–504 (GHEGRRSSQE…PGSRTTGSTA (263 aa)). Ser-257, Ser-304, and Ser-307 each carry phosphoserine. A compositionally biased stretch (low complexity) spans 271–307 (ISSISETELELSSDGGSSSGRSSHLTNSIEEASSPAS). The span at 333–352 (TNSEYESGSESEPDLSEDAD) shows a compositional bias: acidic residues. Residues 427-437 (APRLGPAQPGP) show a composition bias toward low complexity. 2 stretches are compositionally biased toward acidic residues: residues 471 to 490 (SEEE…DAED) and 541 to 555 (DSEE…EEEA). The SH3 domain maps to 610–671 (EREQTHRAVF…PAFYAHAVPG (62 aa)). The region spanning 683–819 (PCWVDRFDVQ…FLEYYQEHLA (137 aa)) is the PID domain.

The protein belongs to the JIP scaffold family. As to quaternary structure, forms homo- or heterooligomeric complexes. Binds specific components of the JNK signaling pathway namely JNK1, JNK2, JNK3, MAP2K7, MAP3K10, MAP3K11, MAP3K12 and MAPK13. Also binds the proline-rich domain-containing splice variant of apolipoprotein E receptor 2 (ApoER2). Binds the TPR motif-containing C-terminal of kinesin light chain. Binds the cytoplasmic tails of LRP1 and LRP2 (Megalin). Interacts with DCLK2. Interacts with FGF13; enables the interaction with MAPK13 and may regulate the MAPK8IP2 scaffolding activity. Interacts with TIAM1 and TIAM2. Interacts with SH3RF2. Highly expressed in brain. Expressed in all neurons. Also expressed in testis, primarily in the epididymal epidermis.

It is found in the cytoplasm. Its function is as follows. The JNK-interacting protein (JIP) group of scaffold proteins selectively mediates JNK signaling by aggregating specific components of the MAPK cascade to form a functional JNK signaling module. JIP2 inhibits IL1 beta-induced apoptosis in insulin-secreting cells. The protein is C-Jun-amino-terminal kinase-interacting protein 2 (Mapk8ip2) of Mus musculus (Mouse).